Reading from the N-terminus, the 305-residue chain is uncharacterized protein (305 aa).

Positions 53 to 185 are disordered; sequence SGRIGDGDDG…TGPRSSRTVG (133 aa). Composition is skewed to basic and acidic residues over residues 95–116 and 128–142; these read VEER…ERPT and GSER…RSEG. The segment covering 161–171 has biased composition (polar residues); that stretch reads GNTQAPSQSAE. An RING-type; atypical zinc finger spans residues 260–302; that stretch reads CAICMSNFIKNQRLRVLPCDHRFHVGCVDKWLLGHSNKCPVCR.

This is an uncharacterized protein from Encephalitozoon cuniculi (strain GB-M1) (Microsporidian parasite).